Consider the following 73-residue polypeptide: Disintegrin trigramin-gamma (73 aa).

The Disintegrin domain maps to 1–73 (EAGEDCDCGS…AGCPRNPLHA (73 aa)). Cystine bridges form between Cys-6–Cys-21, Cys-8–Cys-16, Cys-15–Cys-38, Cys-29–Cys-35, Cys-34–Cys-59, and Cys-47–Cys-66. The Cell attachment site signature appears at 51-53 (RGD).

Belongs to the venom metalloproteinase (M12B) family. P-II subfamily. P-IIa sub-subfamily. In terms of assembly, monomer (disintegrin). Expressed by the venom gland.

Its subcellular location is the secreted. Its function is as follows. Inhibits fibrinogen interaction with platelets. Acts by binding to alpha-IIb/beta-3 (ITGA2B/ITGB3) on the platelet surface and inhibits aggregation induced by ADP, thrombin, platelet-activating factor and collagen. The sequence is that of Disintegrin trigramin-gamma from Craspedocephalus gramineus (Bamboo pit viper).